The primary structure comprises 165 residues: 6,7-dimethyl-8-ribityllumazine synthase (165 aa).

Residues Trp26, 57–59 (SVE), and 79–81 (VVV) each bind 5-amino-6-(D-ribitylamino)uracil. A (2S)-2-hydroxy-3-oxobutyl phosphate-binding site is contributed by 84-85 (AT). The active-site Proton donor is His87. His112 contacts 5-amino-6-(D-ribitylamino)uracil. Residue Arg126 coordinates (2S)-2-hydroxy-3-oxobutyl phosphate.

It belongs to the DMRL synthase family.

The catalysed reaction is (2S)-2-hydroxy-3-oxobutyl phosphate + 5-amino-6-(D-ribitylamino)uracil = 6,7-dimethyl-8-(1-D-ribityl)lumazine + phosphate + 2 H2O + H(+). It functions in the pathway cofactor biosynthesis; riboflavin biosynthesis; riboflavin from 2-hydroxy-3-oxobutyl phosphate and 5-amino-6-(D-ribitylamino)uracil: step 1/2. Its function is as follows. Catalyzes the formation of 6,7-dimethyl-8-ribityllumazine by condensation of 5-amino-6-(D-ribitylamino)uracil with 3,4-dihydroxy-2-butanone 4-phosphate. This is the penultimate step in the biosynthesis of riboflavin. The protein is 6,7-dimethyl-8-ribityllumazine synthase of Salinispora arenicola (strain CNS-205).